We begin with the raw amino-acid sequence, 139 residues long: Nucleoside diphosphate kinase (139 aa).

Positions 9, 57, 85, 91, 102, and 112 each coordinate ATP. H115 serves as the catalytic Pros-phosphohistidine intermediate.

Belongs to the NDK family. In terms of assembly, homotetramer. The cofactor is Mg(2+).

It localises to the cytoplasm. It carries out the reaction a 2'-deoxyribonucleoside 5'-diphosphate + ATP = a 2'-deoxyribonucleoside 5'-triphosphate + ADP. It catalyses the reaction a ribonucleoside 5'-diphosphate + ATP = a ribonucleoside 5'-triphosphate + ADP. Functionally, major role in the synthesis of nucleoside triphosphates other than ATP. The ATP gamma phosphate is transferred to the NDP beta phosphate via a ping-pong mechanism, using a phosphorylated active-site intermediate. This chain is Nucleoside diphosphate kinase, found in Desulfosudis oleivorans (strain DSM 6200 / JCM 39069 / Hxd3) (Desulfococcus oleovorans).